The primary structure comprises 368 residues: C-glycoside deglycosidase alpha subunit (368 aa).

E145 is an a divalent metal cation binding site. The active-site Proton acceptor is H147. A divalent metal cation-binding residues include D177, H275, and E311.

The protein belongs to the C-glycoside deglycosidase alpha subunit family. As to quaternary structure, heterodimer composed of an alpha subunit (CarB) and a beta subunit (CarC). A divalent metal cation is required as a cofactor.

It catalyses the reaction 3''-dehydroisovitexin = 1,5-anhydro-D-erythro-hex-1-en-3-ulose + apigenin. The enzyme catalyses 3''-dehydroisoorientin = 1,5-anhydro-D-erythro-hex-1-en-3-ulose + luteolin. In terms of biological role, carbon-carbon bond-cleaving enzyme which participates in the metabolism of C-glycosides. Acts on the C6-glycosylated compounds 3''-dehydroisovitexin (3''-oxo-isovitexin) and 3''-dehydroisoorientin (3''-oxo-homoorientin). Shows weak activity with 3'-dehydromangiferin (3'-oxo-mangiferin). The protein is C-glycoside deglycosidase alpha subunit of Microbacterium trichothecenolyticum (Aureobacterium trichothecenolyticum).